The following is a 236-amino-acid chain: Apoptosis regulator Bcl-2 (236 aa).

Residues 10-30 (DNREIVMKYIHYKLSQRGYEW) carry the BH4 motif. A Phosphothreonine; by MAPK8 modification is found at Thr-69. Ser-70 carries the post-translational modification Phosphoserine; by MAPK8 and PKC. Residue Ser-84 is modified to Phosphoserine; by MAPK8. The short motif at 90–104 (VHLTLRRAGDDFSRR) is the BH3 element. Residues 133-152 (ELFRDGVNWGRIVAFFEFGG) carry the BH1 motif. Positions 184–199 (TWIQDNGGWDAFVELY) match the BH2 motif. Residues 209-230 (FSWLSLKTLLSLALVGACITLG) traverse the membrane as a helical segment.

It belongs to the Bcl-2 family. As to quaternary structure, forms homodimers, and heterodimers with BAX, BAD, BAK and Bcl-X(L). Heterodimerization with BAX requires intact BH1 and BH2 motifs, and is necessary for anti-apoptotic activity. Component of the complex, at least composed of LRPPRC, BECN1 and BCL2; the interactions prevent BECN1 from forming an autophagy-inducing complex with PIK3C3. Interacts with EI24. Also interacts with APAF1, BBC3, BCL2L1, BNIPL, MRPL41 and TP53BP2. Binding to FKBP8 seems to target BCL2 to the mitochondria and probably interferes with the binding of BCL2 to its targets. Interacts with BAG1 in an ATP-dependent manner. Interacts with RAF1 (the 'Ser-338' and 'Ser-339' phosphorylated form). Interacts (via the BH4 domain) with EGLN3; the interaction prevents the formation of the BAX-BCL2 complex and inhibits the anti-apoptotic activity of BCL2. Interacts with G0S2; this interaction also prevents the formation of the anti-apoptotic BAX-BCL2 complex. Interacts with RTL10/BOP. Interacts with the SCF(FBXO10) complex. Interacts (via the loop between motifs BH4 and BH3) with NLRP1 (via LRR repeats), but not with NLRP2, NLRP3, NLRP4, PYCARD, nor MEFV. Interacts with GIMAP3/IAN4, GIMAP4/IAN1 and GIMAP5/IAN5. Interacts with BCAP31. Interacts with IRF3; the interaction is inhibited by Sendai virus infection. Interacts with BECN1; thereby inhibiting autophagy in non-starvation conditions. Interacts with AMBRA1; thereby inhibiting autophagy. Post-translationally, phosphorylation/dephosphorylation on Ser-70 regulates anti-apoptotic activity. Growth factor-stimulated phosphorylation on Ser-70 by PKC is required for the anti-apoptosis activity and occurs during the G2/M phase of the cell cycle. In the absence of growth factors, BCL2 appears to be phosphorylated by other protein kinases such as ERKs and stress-activated kinases. Phosphorylated by MAPK8/JNK1 at Thr-69, Ser-70 and Ser-84, which stimulates starvation-induced autophagy. Dephosphorylated by protein phosphatase 2A (PP2A). Proteolytically cleaved by caspases during apoptosis. The cleaved protein, lacking the BH4 motif, has pro-apoptotic activity, causes the release of cytochrome c into the cytosol promoting further caspase activity. In terms of processing, monoubiquitinated by PRKN, leading to an increase in its stability. Ubiquitinated by SCF(FBXO10), leading to its degradation by the proteasome.

The protein localises to the mitochondrion outer membrane. It localises to the nucleus membrane. Its subcellular location is the endoplasmic reticulum membrane. The protein resides in the cytoplasm. Its function is as follows. Suppresses apoptosis in a variety of cell systems including factor-dependent lymphohematopoietic and neural cells. Regulates cell death by controlling the mitochondrial membrane permeability. Appears to function in a feedback loop system with caspases. Inhibits caspase activity either by preventing the release of cytochrome c from the mitochondria and/or by binding to the apoptosis-activating factor (APAF-1). Also acts as an inhibitor of autophagy: interacts with BECN1 and AMBRA1 during non-starvation conditions and inhibits their autophagy function. May attenuate inflammation by impairing NLRP1-inflammasome activation, hence CASP1 activation and IL1B release. The protein is Apoptosis regulator Bcl-2 (BCL2) of Cricetulus griseus (Chinese hamster).